Reading from the N-terminus, the 526-residue chain is Rho guanine nucleotide exchange factor 3 (526 aa).

The tract at residues 20-40 is disordered; sequence ELPPASGPAKDAEEPSNKRVK. Phosphoserine is present on residues S47 and S70. One can recognise a DH domain in the interval 122 to 304; it reads KRQEAIFELS…QGIVAEINTK (183 aa). A PH domain is found at 291 to 449; that stretch reads INIIQGIVAE…WLNCIRQAKE (159 aa). 2 disordered regions span residues 464 to 502 and 507 to 526; these read EGSFLNPTTGSRELQGETKLEQMDQSDSESDCSMDTSEV and EHMEQTDSSCGNSRHGESNV. Residues 466 to 475 show a composition bias toward polar residues; the sequence is SFLNPTTGSR.

In terms of assembly, interacts with RHOA and RHOB.

The protein resides in the cytoplasm. Acts as a guanine nucleotide exchange factor (GEF) for RhoA and RhoB GTPases. This chain is Rho guanine nucleotide exchange factor 3 (ARHGEF3), found in Macaca fascicularis (Crab-eating macaque).